We begin with the raw amino-acid sequence, 1163 residues long: Integrin alpha-X (1163 aa).

The first 19 residues, 1–19, serve as a signal peptide directing secretion; that stretch reads MTRTRAALLLFTALATSLG. At 20–1107 the chain is on the extracellular side; the sequence is FNLDTEELTA…EKYKVHNPTP (1088 aa). 2 FG-GAP repeats span residues 23–78 and 79–138; these read DTEE…ACEP and IGLQ…TQRL. N-linked (GlcNAc...) asparagine glycosylation is present at asparagine 61. A disulfide bond links cysteine 69 and cysteine 76. N-linked (GlcNAc...) asparagine glycosylation is present at asparagine 89. 2 cysteine pairs are disulfide-bonded: cysteine 108–cysteine 126 and cysteine 116–cysteine 145. The Mg(2+) site is built by aspartate 157, serine 159, serine 161, and aspartate 259. The VWFA domain maps to 165–339; it reads RNFATMMNFV…KEKIFAIEGT (175 aa). FG-GAP repeat units lie at residues 340–391, 392–443, 444–504, 507–565, and 570–630; these read ETTS…PTFI, NMSQ…SRQW, RMKA…WRRW, DAVL…PSIS, and QRIA…FIPA. A glycan (N-linked (GlcNAc...) asparagine) is linked at asparagine 392. Ca(2+)-binding residues include aspartate 466, aspartate 468, aspartate 470, and aspartate 474. Cysteines 495 and 506 form a disulfide. Ca(2+) contacts are provided by aspartate 530, asparagine 532, aspartate 534, aspartate 538, aspartate 593, aspartate 597, and aspartate 601. Cystine bridges form between cysteine 639-cysteine 722 and cysteine 655-cysteine 712. N-linked (GlcNAc...) asparagine glycans are attached at residues asparagine 697 and asparagine 735. 2 disulfide bridges follow: cysteine 771–cysteine 777 and cysteine 848–cysteine 863. Asparagine 899 and asparagine 939 each carry an N-linked (GlcNAc...) asparagine glycan. 2 cysteine pairs are disulfide-bonded: cysteine 998–cysteine 1022 and cysteine 1027–cysteine 1032. N-linked (GlcNAc...) asparagine glycosylation occurs at asparagine 1050. The chain crosses the membrane as a helical span at residues 1108 to 1128; it reads LIVGSSIGGLLLLALITAVLY. At 1129–1163 the chain is on the cytoplasmic side; sequence KVGFFKRQYKEMMEEANGQIAPENGTQTPSPPSEK. The GFFKR motif signature appears at 1131–1135; sequence GFFKR.

The protein belongs to the integrin alpha chain family. In terms of assembly, heterodimer of an alpha and a beta subunit. Alpha-X associates with beta-2. Predominantly expressed in monocytes and granulocytes.

The protein resides in the membrane. In terms of biological role, integrin alpha-X/beta-2 is a receptor for fibrinogen. It recognizes the sequence G-P-R in fibrinogen. It mediates cell-cell interaction during inflammatory responses. It is especially important in monocyte adhesion and chemotaxis. The polypeptide is Integrin alpha-X (ITGAX) (Homo sapiens (Human)).